The following is a 281-amino-acid chain: Large ribosomal subunit protein uL2 (281 aa).

Basic and acidic residues predominate over residues 27 to 38 (DSPEKSLTEPLK). 2 disordered regions span residues 27–59 (DSPE…GGHK) and 225–281 (AMNP…ARSQ). Positions 45-59 (VHGHITRRHQGGGHK) are enriched in basic residues.

It belongs to the universal ribosomal protein uL2 family. As to quaternary structure, part of the 50S ribosomal subunit. Forms a bridge to the 30S subunit in the 70S ribosome.

Its function is as follows. One of the primary rRNA binding proteins. Required for association of the 30S and 50S subunits to form the 70S ribosome, for tRNA binding and peptide bond formation. It has been suggested to have peptidyltransferase activity; this is somewhat controversial. Makes several contacts with the 16S rRNA in the 70S ribosome. The chain is Large ribosomal subunit protein uL2 from Myxococcus xanthus (strain DK1622).